We begin with the raw amino-acid sequence, 210 residues long: Replication protein RepB (210 aa).

Belongs to the Gram-positive plasmids replication protein type 2 family.

Is essential for plasmid replication. Nicks the positive strand at the plus origin of replication. This Streptococcus agalactiae protein is Replication protein RepB (repB).